Here is a 291-residue protein sequence, read N- to C-terminus: Gamma-sarcoglycan (291 aa).

A helical; Signal-anchor for type II membrane protein membrane pass occupies residues 38-58 (LFVLLLLIILLVNFALTIWIL). Topologically, residues 59 to 291 (KVMWFSPTGM…TCHEHSHICL (233 aa)) are extracellular. N-linked (GlcNAc...) asparagine glycosylation occurs at N110. Cystine bridges form between C265–C290 and C267–C283.

The protein belongs to the sarcoglycan beta/delta/gamma/zeta family. Interacts with the syntrophin SNTA1. Cross-link to form 2 major subcomplexes: one consisting of SGCB, SGCD and SGCG and the other consisting of SGCB and SGCD. The association between SGCB and SGCG is particularly strong while SGCA is loosely associated with the other sarcoglycans. Interacts with FLNC. In terms of processing, disulfide bonds are present.

It localises to the cell membrane. The protein localises to the sarcolemma. Its subcellular location is the cytoplasm. It is found in the cytoskeleton. Component of the sarcoglycan complex, a subcomplex of the dystrophin-glycoprotein complex which forms a link between the F-actin cytoskeleton and the extracellular matrix. This Canis lupus familiaris (Dog) protein is Gamma-sarcoglycan (SGCG).